The following is a 328-amino-acid chain: Eukaryotic translation initiation factor 3 subunit I (328 aa).

WD repeat units lie at residues glycine 8 to arginine 49, glycine 50 to threonine 89, aspartate 146 to glutamine 185, glycine 191 to threonine 230, and glycine 288 to lysine 327.

Belongs to the eIF-3 subunit I family. Component of the eukaryotic translation initiation factor 3 (eIF-3) complex.

It localises to the cytoplasm. In terms of biological role, component of the eukaryotic translation initiation factor 3 (eIF-3) complex, which is involved in protein synthesis of a specialized repertoire of mRNAs and, together with other initiation factors, stimulates binding of mRNA and methionyl-tRNAi to the 40S ribosome. The eIF-3 complex specifically targets and initiates translation of a subset of mRNAs involved in cell proliferation. The sequence is that of Eukaryotic translation initiation factor 3 subunit I (TIF3I1) from Arabidopsis thaliana (Mouse-ear cress).